Here is a 306-residue protein sequence, read N- to C-terminus: L-lactate dehydrogenase (306 aa).

NAD(+) is bound by residues Val11, Asp32, Lys37, and 76–77 (GA). Residues Gln79 and Arg85 each contribute to the substrate site. Residues Ser98, 115 to 117 (VSN), and Ser140 each bind NAD(+). A substrate-binding site is contributed by 117–120 (NPVD). 145–148 (DTAR) contacts substrate. Residues Arg150 and His165 each contribute to the beta-D-fructose 1,6-bisphosphate site. The active-site Proton acceptor is the His172. Tyr214 is subject to Phosphotyrosine. Thr223 provides a ligand contact to substrate.

This sequence belongs to the LDH/MDH superfamily. LDH family. In terms of assembly, homotetramer.

The protein localises to the cytoplasm. The enzyme catalyses (S)-lactate + NAD(+) = pyruvate + NADH + H(+). The protein operates within fermentation; pyruvate fermentation to lactate; (S)-lactate from pyruvate: step 1/1. Allosterically activated by fructose 1,6-bisphosphate (FBP). Functionally, catalyzes the conversion of lactate to pyruvate. In Synechococcus sp. (strain JA-3-3Ab) (Cyanobacteria bacterium Yellowstone A-Prime), this protein is L-lactate dehydrogenase.